The primary structure comprises 353 residues: Photosystem II protein D1 (353 aa).

The residue at position 2 (T2) is an N-acetylthreonine. Phosphothreonine is present on T2. The next 3 helical transmembrane spans lie at 29-46 (YIGWFGVLMIPTLLTATS), 118-133 (HFLLGVACYMGREWEL), and 142-156 (WIAVAYSAPVAAATA). H118 provides a ligand contact to chlorophyll a. Y126 is a binding site for pheophytin a. D170 and E189 together coordinate [CaMn4O5] cluster. The helical transmembrane segment at 197 to 218 (FHMLGVAGVFGGSLFSAMHGSL) threads the bilayer. Position 198 (H198) interacts with chlorophyll a. A quinone is bound by residues H215 and 264-265 (SF). Position 215 (H215) interacts with Fe cation. Position 272 (H272) interacts with Fe cation. A helical membrane pass occupies residues 274–288 (FLTAWPVVGIWFTAL). Positions 332, 333, 342, and 344 each coordinate [CaMn4O5] cluster. Positions 345–353 (AVEAPSTNG) are excised as a propeptide.

Belongs to the reaction center PufL/M/PsbA/D family. As to quaternary structure, PSII is composed of 1 copy each of membrane proteins PsbA, PsbB, PsbC, PsbD, PsbE, PsbF, PsbH, PsbI, PsbJ, PsbK, PsbL, PsbM, PsbT, PsbX, PsbY, PsbZ, Psb30/Ycf12, at least 3 peripheral proteins of the oxygen-evolving complex and a large number of cofactors. It forms dimeric complexes. The D1/D2 heterodimer binds P680, chlorophylls that are the primary electron donor of PSII, and subsequent electron acceptors. It shares a non-heme iron and each subunit binds pheophytin, quinone, additional chlorophylls, carotenoids and lipids. D1 provides most of the ligands for the Mn4-Ca-O5 cluster of the oxygen-evolving complex (OEC). There is also a Cl(-1) ion associated with D1 and D2, which is required for oxygen evolution. The PSII complex binds additional chlorophylls, carotenoids and specific lipids. serves as cofactor. Tyr-161 forms a radical intermediate that is referred to as redox-active TyrZ, YZ or Y-Z. In terms of processing, C-terminally processed by CTPA; processing is essential to allow assembly of the oxygen-evolving complex and thus photosynthetic growth.

The protein resides in the plastid. Its subcellular location is the chloroplast thylakoid membrane. The catalysed reaction is 2 a plastoquinone + 4 hnu + 2 H2O = 2 a plastoquinol + O2. In terms of biological role, photosystem II (PSII) is a light-driven water:plastoquinone oxidoreductase that uses light energy to abstract electrons from H(2)O, generating O(2) and a proton gradient subsequently used for ATP formation. It consists of a core antenna complex that captures photons, and an electron transfer chain that converts photonic excitation into a charge separation. The D1/D2 (PsbA/PsbD) reaction center heterodimer binds P680, the primary electron donor of PSII as well as several subsequent electron acceptors. This chain is Photosystem II protein D1, found in Barbarea verna (Land cress).